The following is a 78-amino-acid chain: Large ribosomal subunit protein bL28 (78 aa).

Residues 1–30 are disordered; the sequence is MAAHCQVTGAQPGFGHSISHSHRRTKRRWN. The segment covering 19 to 30 has biased composition (basic residues); sequence SHSHRRTKRRWN.

The protein belongs to the bacterial ribosomal protein bL28 family.

The polypeptide is Large ribosomal subunit protein bL28 (Kocuria rhizophila (strain ATCC 9341 / DSM 348 / NBRC 103217 / DC2201)).